A 2998-amino-acid chain; its full sequence is Probable polyketide synthase 14 (2998 aa).

The Ketosynthase family 3 (KS3) domain occupies 19–456 (EDDIAIIGIG…GSNCCLILSE (438 aa)). Catalysis depends on for beta-ketoacyl synthase activity residues Cys189, His331, and His376. The segment at 657 to 690 (GIEASFIVGHSLGEIPAAYCSGMITLDTLCYLIY) is acyl/malonyl transferase. Ser667 serves as the catalytic For acyl/malonyl transferase activity. The N-terminal hotdog fold stretch occupies residues 962 to 1084 (IDQLGFSLIE…GNFQLFTSGN (123 aa)). The PKS/mFAS DH domain occupies 962–1249 (IDQLGFSLIE…CKSLTIIKDS (288 aa)). Residue His996 is the Proton acceptor; for dehydratase activity of the active site. The tract at residues 1101 to 1249 (NLTKLTKNEL…CKSLTIIKDS (149 aa)) is C-terminal hotdog fold. Asp1159 functions as the Proton donor; for dehydratase activity in the catalytic mechanism. A helical membrane pass occupies residues 1979 to 1999 (SILIHSGSGGIGLSALNILKW). A Carrier domain is found at 2476–2553 (ENDTSIDSLF…SSIKLITNQL (78 aa)). At Ser2513 the chain carries O-(pantetheine 4'-phosphoryl)serine. Residues 2559-2578 (DGQQQQHRQNKKNNNIPENK) form a disordered region. A compositionally biased stretch (low complexity) spans 2561–2573 (QQQQHRQNKKNNN). The helical transmembrane segment at 2621–2641 (IFLTGSTGFLGAYLLWYLIQM) threads the bilayer.

The cofactor is pantetheine 4'-phosphate.

The protein resides in the membrane. Functionally, probable polyketide synthase. The chain is Probable polyketide synthase 14 (pks14) from Dictyostelium discoideum (Social amoeba).